The sequence spans 122 residues: Class I hydrophobin 2 (122 aa).

The first 22 residues, Met-1 to Ala-22, serve as a signal peptide directing secretion. 4 disulfides stabilise this stretch: Cys-40/Cys-101, Cys-47/Cys-95, Cys-48/Cys-81, and Cys-102/Cys-115.

Belongs to the fungal hydrophobin family. In terms of assembly, self-assembles to form functional amyloid fibrils called rodlets. Self-assembly into fibrillar rodlets occurs spontaneously at hydrophobic:hydrophilic interfaces and the rodlets further associate laterally to form amphipathic monolayers.

It is found in the secreted. Its subcellular location is the cell wall. Its function is as follows. Aerial growth, conidiation, and dispersal of filamentous fungi in the environment rely upon a capability of their secreting small amphipathic proteins called hydrophobins (HPBs) with low sequence identity. Class I can self-assemble into an outermost layer of rodlet bundles on aerial cell surfaces, conferring cellular hydrophobicity that supports fungal growth, development and dispersal; whereas Class II form highly ordered films at water-air interfaces through intermolecular interactions but contribute nothing to the rodlet structure. Hah2 is a class I hydrophobin that is involved in aerial growth of mycelia, but does not play a role in pathogenesis. The chain is Class I hydrophobin 2 from Heterobasidion annosum (Root rot fungus).